The following is a 155-amino-acid chain: Endoribonuclease YbeY (155 aa).

Zn(2+) contacts are provided by histidine 120, histidine 124, and histidine 130.

This sequence belongs to the endoribonuclease YbeY family. Zn(2+) serves as cofactor.

It is found in the cytoplasm. In terms of biological role, single strand-specific metallo-endoribonuclease involved in late-stage 70S ribosome quality control and in maturation of the 3' terminus of the 16S rRNA. The sequence is that of Endoribonuclease YbeY from Staphylococcus aureus (strain Mu3 / ATCC 700698).